The sequence spans 440 residues: Tryptophan synthase beta chain 2 (440 aa).

Lys110 carries the post-translational modification N6-(pyridoxal phosphate)lysine.

The protein belongs to the TrpB family. Tetramer of two alpha and two beta chains. The cofactor is pyridoxal 5'-phosphate.

It catalyses the reaction (1S,2R)-1-C-(indol-3-yl)glycerol 3-phosphate + L-serine = D-glyceraldehyde 3-phosphate + L-tryptophan + H2O. Its pathway is amino-acid biosynthesis; L-tryptophan biosynthesis; L-tryptophan from chorismate: step 5/5. Its function is as follows. The beta subunit is responsible for the synthesis of L-tryptophan from indole and L-serine. The protein is Tryptophan synthase beta chain 2 (trpB2) of Pyrococcus abyssi (strain GE5 / Orsay).